A 20-amino-acid polypeptide reads, in one-letter code: Non-specific lipid-transfer protein-like protein (20 aa).

This sequence belongs to the plant LTP family.

In Jatropha curcas (Barbados nut), this protein is Non-specific lipid-transfer protein-like protein.